The primary structure comprises 141 residues: Large ribosomal subunit protein uL11 (141 aa).

This sequence belongs to the universal ribosomal protein uL11 family. In terms of assembly, part of the ribosomal stalk of the 50S ribosomal subunit. Interacts with L10 and the large rRNA to form the base of the stalk. L10 forms an elongated spine to which L12 dimers bind in a sequential fashion forming a multimeric L10(L12)X complex. In terms of processing, one or more lysine residues are methylated.

Its function is as follows. Forms part of the ribosomal stalk which helps the ribosome interact with GTP-bound translation factors. The chain is Large ribosomal subunit protein uL11 from Thermotoga sp. (strain RQ2).